The chain runs to 360 residues: Phospho-N-acetylmuramoyl-pentapeptide-transferase (360 aa).

10 helical membrane-spanning segments follow: residues 26–46 (AIVS…RMIA), 72–92 (PTMG…LWAY), 94–114 (SNPY…IGFV), 132–152 (WKYF…YLAG), 168–188 (VMPQ…VGTG), 199–219 (GLAI…AWAT), 236–256 (AGEL…FLWF), 263–283 (VFMG…IAVL), 288–308 (FLLV…ILQV), and 338–358 (VIVR…ATLK).

The protein belongs to the glycosyltransferase 4 family. MraY subfamily. Mg(2+) serves as cofactor.

It localises to the cell inner membrane. The enzyme catalyses UDP-N-acetyl-alpha-D-muramoyl-L-alanyl-gamma-D-glutamyl-meso-2,6-diaminopimeloyl-D-alanyl-D-alanine + di-trans,octa-cis-undecaprenyl phosphate = di-trans,octa-cis-undecaprenyl diphospho-N-acetyl-alpha-D-muramoyl-L-alanyl-D-glutamyl-meso-2,6-diaminopimeloyl-D-alanyl-D-alanine + UMP. It functions in the pathway cell wall biogenesis; peptidoglycan biosynthesis. Its function is as follows. Catalyzes the initial step of the lipid cycle reactions in the biosynthesis of the cell wall peptidoglycan: transfers peptidoglycan precursor phospho-MurNAc-pentapeptide from UDP-MurNAc-pentapeptide onto the lipid carrier undecaprenyl phosphate, yielding undecaprenyl-pyrophosphoryl-MurNAc-pentapeptide, known as lipid I. The chain is Phospho-N-acetylmuramoyl-pentapeptide-transferase from Citrobacter koseri (strain ATCC BAA-895 / CDC 4225-83 / SGSC4696).